Consider the following 551-residue polypeptide: Cytochrome P450 monooxygenase virE (551 aa).

A signal peptide spans 1-25; sequence MPKPWVVFGLGTLVLFLWRLNKIGR. Asn392 carries N-linked (GlcNAc...) asparagine glycosylation. Cys439 lines the heme pocket.

The protein belongs to the cytochrome P450 family. Requires heme as cofactor.

The protein operates within secondary metabolite biosynthesis. Cytochrome P450 monooxygenase; part of the gene cluster that mediates the biosynthesis of virensols and trichoxide, fungal natural products that contain or are derived from a salicylaldehyde core. The pathway begins with the synthesis of the reduced chain in virensol C by the highly reducing polyketide synthase virA via condensation of one acetate and 8 malonate units. VirA has interesting programming rules since the first 2 ketides are fully reduced, the 3 following ketides undergo beta-dehydration, and the last 3 ketides are only reduced to beta-hydroxys to yield the trihydroxy portion. The production of aldehyde virensol C by virA alone is surprising, since virA does not contain a reductase (R) domain that is typically associated with reductive product release in HRPKS. The cupin-domain enzyme virC is involved in enhancing virA product turnover. The short-chain dehydrogenase virB then oxidizes the C-7 alcohol of virensol C to a ketone, yielding virensol D. Virensol D is further transformed to salicylaldehyde 5-deoxyaurocitrin by the short-chain dehydrogenase virD. VirD catalyzes the dehydrogenation of C-3 to form the beta-ketone aldehyde, which is followed by the generation of the nucleophilic C-2 that is required for the intramolecular aldol condensation between C-2 and C-7, itself followed by dehydration and aromatization which leads to salicylaldehyde 5-deoxyaurocitrin. While the dehydrogenation of virensol D is definitely catalyzed by virD, the aldol condensation and dehydration may be uncatalyzed or assisted by virD. The short chain dehydrogenase virG then converts salicylaldehyde 5-deoxyaurocitrin into virensol B which is further hydroxylated by the cytochrome P450 monooxygenase virE to yield the hydroquinone virensol A. VirI then may oxidize virensol A to form the quinone, while virH performs the epoxidation. Finally, the two remaining short-chain dehydrogenases, virK and virL, are probably responsible for reducing the ketones to the corresponding alcohols to furnish the epoxycyclohexanol structure in trichoxide. This is Cytochrome P450 monooxygenase virE from Hypocrea virens (strain Gv29-8 / FGSC 10586) (Gliocladium virens).